Here is a 91-residue protein sequence, read N- to C-terminus: Small ribosomal subunit protein uS15 (91 aa).

This sequence belongs to the universal ribosomal protein uS15 family. Part of the 30S ribosomal subunit. Forms a bridge to the 50S subunit in the 70S ribosome, contacting the 23S rRNA.

In terms of biological role, one of the primary rRNA binding proteins, it binds directly to 16S rRNA where it helps nucleate assembly of the platform of the 30S subunit by binding and bridging several RNA helices of the 16S rRNA. Its function is as follows. Forms an intersubunit bridge (bridge B4) with the 23S rRNA of the 50S subunit in the ribosome. This chain is Small ribosomal subunit protein uS15, found in Deinococcus radiodurans (strain ATCC 13939 / DSM 20539 / JCM 16871 / CCUG 27074 / LMG 4051 / NBRC 15346 / NCIMB 9279 / VKM B-1422 / R1).